Consider the following 373-residue polypeptide: Histidinol-phosphate aminotransferase (373 aa).

N6-(pyridoxal phosphate)lysine is present on lysine 231.

Belongs to the class-II pyridoxal-phosphate-dependent aminotransferase family. Histidinol-phosphate aminotransferase subfamily. Pyridoxal 5'-phosphate is required as a cofactor.

It carries out the reaction L-histidinol phosphate + 2-oxoglutarate = 3-(imidazol-4-yl)-2-oxopropyl phosphate + L-glutamate. It functions in the pathway amino-acid biosynthesis; L-histidine biosynthesis; L-histidine from 5-phospho-alpha-D-ribose 1-diphosphate: step 7/9. The protein is Histidinol-phosphate aminotransferase (hisC) of Methanocaldococcus jannaschii (strain ATCC 43067 / DSM 2661 / JAL-1 / JCM 10045 / NBRC 100440) (Methanococcus jannaschii).